Reading from the N-terminus, the 383-residue chain is tRNA-specific 2-thiouridylase MnmA (383 aa).

Residues 30–37 and Met-56 each bind ATP; that span reads GMSGGVDS. The interval 116-118 is interaction with target base in tRNA; the sequence is NPD. The Nucleophile role is filled by Cys-121. Cys-121 and Cys-218 are oxidised to a cystine. Gly-146 is an ATP binding site. Residues 168–170 are interaction with tRNA; the sequence is KDQ. The Cysteine persulfide intermediate role is filled by Cys-218. An interaction with tRNA region spans residues 330–331; sequence RY.

The protein belongs to the MnmA/TRMU family.

It is found in the cytoplasm. It carries out the reaction S-sulfanyl-L-cysteinyl-[protein] + uridine(34) in tRNA + AH2 + ATP = 2-thiouridine(34) in tRNA + L-cysteinyl-[protein] + A + AMP + diphosphate + H(+). Catalyzes the 2-thiolation of uridine at the wobble position (U34) of tRNA, leading to the formation of s(2)U34. The polypeptide is tRNA-specific 2-thiouridylase MnmA (Haemophilus influenzae (strain ATCC 51907 / DSM 11121 / KW20 / Rd)).